A 438-amino-acid polypeptide reads, in one-letter code: MVAGKRTGAAKGSRHNKKYWRKGTNIDDIEDSIHIKSRQAATGGVISEMKDEDLFIVDRTATANKPVVPKLTKKQQAALEKITKNITQEHVTLPKPSTTSKILKKPAKLPRGNAILALKKGPKAAAPAAKKKNFDVWTTDLTPKIPKSKLENQEAAEHFLKVVKKKQPKTPGKSITSLLPAVQIAEGGASYNPESAEYQEYVAKIAGEEQKLIDHEAKIKAGIEPQWEKVTTEHERFLEMAEGLRIHPKYGKDDEEEEEAGNSEKSMKTGGEAEPKSQRVECDRMTKEQKKKKAKAQKLDKEEKRRLEEKAKEQDSHNVYRTKQLHKELDEEEKQRHEESEVRKKEKLINKLTKRQQLGKGKFVDAEDPFLLQEELTGNLRQLKPQGHVLDDRMKSLQRRNMLPIGGDKEKRRIKNRLKSKVVEKRSAKNIVKGSRVI.

Disordered stretches follow at residues 1–23 and 247–346; these read MVAG…WRKG and HPKY…RKKE. Residues 12–21 show a composition bias toward basic residues; that stretch reads GSRHNKKYWR. Composition is skewed to basic and acidic residues over residues 265 to 288, 297 to 318, and 325 to 346; these read KSMK…MTKE, QKLD…DSHN, and LHKE…RKKE.

The protein belongs to the NOP53 family.

The protein resides in the nucleus. It is found in the nucleolus. It localises to the nucleoplasm. Functionally, may play a role in ribosome biogenesis, being required for integration of the 5S RNP into the ribosomal large subunit. This is Ribosome biogenesis protein NOP53 from Caenorhabditis elegans.